We begin with the raw amino-acid sequence, 487 residues long: 3-octaprenyl-4-hydroxybenzoate carboxy-lyase (487 aa).

N172 is a Mn(2+) binding site. Residues I175 to R177, R189 to L191, and R194 to G195 each bind prenylated FMN. E238 contributes to the Mn(2+) binding site. D287 (proton donor) is an active-site residue.

It belongs to the UbiD family. Homohexamer. Requires prenylated FMN as cofactor. It depends on Mn(2+) as a cofactor.

The protein localises to the cell membrane. The enzyme catalyses a 4-hydroxy-3-(all-trans-polyprenyl)benzoate + H(+) = a 2-(all-trans-polyprenyl)phenol + CO2. Its pathway is cofactor biosynthesis; ubiquinone biosynthesis. Functionally, catalyzes the decarboxylation of 3-octaprenyl-4-hydroxy benzoate to 2-octaprenylphenol, an intermediate step in ubiquinone biosynthesis. The sequence is that of 3-octaprenyl-4-hydroxybenzoate carboxy-lyase from Nitrosococcus oceani (strain ATCC 19707 / BCRC 17464 / JCM 30415 / NCIMB 11848 / C-107).